Consider the following 211-residue polypeptide: N-(5'-phosphoribosyl)anthranilate isomerase (211 aa).

Belongs to the TrpF family.

The enzyme catalyses N-(5-phospho-beta-D-ribosyl)anthranilate = 1-(2-carboxyphenylamino)-1-deoxy-D-ribulose 5-phosphate. It participates in amino-acid biosynthesis; L-tryptophan biosynthesis; L-tryptophan from chorismate: step 3/5. The protein is N-(5'-phosphoribosyl)anthranilate isomerase of Pseudomonas aeruginosa (strain UCBPP-PA14).